Reading from the N-terminus, the 388-residue chain is Lipid-A-disaccharide synthase (388 aa).

This sequence belongs to the LpxB family.

It catalyses the reaction a lipid X + a UDP-2-N,3-O-bis[(3R)-3-hydroxyacyl]-alpha-D-glucosamine = a lipid A disaccharide + UDP + H(+). Its pathway is bacterial outer membrane biogenesis; LPS lipid A biosynthesis. Functionally, condensation of UDP-2,3-diacylglucosamine and 2,3-diacylglucosamine-1-phosphate to form lipid A disaccharide, a precursor of lipid A, a phosphorylated glycolipid that anchors the lipopolysaccharide to the outer membrane of the cell. This is Lipid-A-disaccharide synthase from Burkholderia mallei (strain NCTC 10247).